The following is a 228-amino-acid chain: Geranylgeranylglyceryl phosphate synthase (228 aa).

Residue Lys13 coordinates sn-glycerol 1-phosphate. 2 residues coordinate Mg(2+): Asp15 and Thr41. Sn-glycerol 1-phosphate is bound by residues 159–164 (YIEYSG), Gly189, and 209–210 (GN).

This sequence belongs to the GGGP/HepGP synthase family. Group I subfamily. It depends on Mg(2+) as a cofactor.

The protein localises to the cytoplasm. It carries out the reaction sn-glycerol 1-phosphate + (2E,6E,10E)-geranylgeranyl diphosphate = sn-3-O-(geranylgeranyl)glycerol 1-phosphate + diphosphate. It functions in the pathway membrane lipid metabolism; glycerophospholipid metabolism. In terms of biological role, prenyltransferase that catalyzes the transfer of the geranylgeranyl moiety of geranylgeranyl diphosphate (GGPP) to the C3 hydroxyl of sn-glycerol-1-phosphate (G1P). This reaction is the first ether-bond-formation step in the biosynthesis of archaeal membrane lipids. The chain is Geranylgeranylglyceryl phosphate synthase from Methanospirillum hungatei JF-1 (strain ATCC 27890 / DSM 864 / NBRC 100397 / JF-1).